Consider the following 328-residue polypeptide: Homoarginine-6-hydroxylase 2-ODD-233 (328 aa).

The Fe2OG dioxygenase domain occupies 183–288 (FWVCRLIGYP…VSVAFFYESN (106 aa)). Positions 210, 212, and 268 each coordinate Fe cation. Arg-278 serves as a coordination point for 2-oxoglutarate.

This sequence belongs to the iron/ascorbate-dependent oxidoreductase family. It depends on Fe(2+) as a cofactor. L-ascorbate serves as cofactor. In terms of tissue distribution, expressed in roots and shoots.

Its subcellular location is the cytoplasm. The enzyme catalyses L-homoarginine + 2-oxoglutarate + O2 = 6-hydroxy-L-homoarginine + succinate + CO2. It carries out the reaction melatonin + 2-oxoglutarate + O2 = 2-hydroxymelatonin + succinate + CO2. Functionally, 2-oxoglutarate-dependent dioxygenase catalyzing homoarginine 6-hydroxylation thus producing 6-hydroxy-L-homoarginine. Guanidine (Gd) is in turn synthesized by the spontaneous conversion of 6-hydroxy-L-homoarginine to (S)-2-amino-6-oxohexanoate (RHEA:79843); guanidine is a nitrogen-rich compound that can serve as a defense or signaling substance. Involved in melatonin degradation. Catalyzes the hydroxylation of melatonin to produce 2-hydroxymelatonin. This is Homoarginine-6-hydroxylase 2-ODD-233 from Oryza sativa subsp. japonica (Rice).